The chain runs to 284 residues: MKKLSIVLLSVSMLSSIAFADNSDRVVATYTGGEVRESQIMKEFKPQLNLPSGETIKNFDDFPPQDQDKLIRIYVNNILLKKEVEKSNITSSKEFQEKLENAKNQLAQKELLENYVKSNLTDKMFDDEYNKYVTSLKGKEQIKVAHILVKSEKEANDLKNKLNKGADFAKLAGESSLDKASATNGGVIGYILLNQPGQLVPEFENKAFALKVNEVSTPVKTDYGWHIIKVLEKKPVPIPTKEEAKMTIDNVLAAEILKKYISDLEAKADLKIMLPPAANNEAKK.

Residues 1-20 (MKKLSIVLLSVSMLSSIAFA) form the signal peptide. The PpiC domain maps to 139–232 (KEQIKVAHIL…YGWHIIKVLE (94 aa)).

It belongs to the PpiC/parvulin rotamase family.

Its subcellular location is the cell outer membrane. The enzyme catalyses [protein]-peptidylproline (omega=180) = [protein]-peptidylproline (omega=0). The sequence is that of Parvulin-like PPIase (plp) from Rickettsia bellii (strain RML369-C).